Reading from the N-terminus, the 803-residue chain is E3 ubiquitin-protein ligase UHRF2 (803 aa).

In terms of domain architecture, Ubiquitin-like spans 1–78 (MWIQVRTIDG…IQLLVRPDSS (78 aa)). Composition is skewed to polar residues over residues 79–96 (LPST…SSHN), 106–115 (GGSSSQPSTS), 167–181 (KNGS…NVNH), and 189–200 (KLDNVPSTSNSD). Disordered regions lie at residues 79-115 (LPST…PSTS) and 154-200 (RASD…SNSD). Residues 118–312 (TCLIDPGFGL…VDEIFKIEKP (195 aa)) are required for interaction with histone H3. The tract at residues 195–289 (STSNSDSVAA…KEVRVKVFLG (95 aa)) is interaction with PCNP. Residues 340–396 (DKTCHMCSCHKCGEKRDPNMQLLCDECNMAYHIYCLSPPLDKVPEEEYWYCPSCKTD) form a PHD-type zinc finger. Positions 415–645 (KMPSASTESR…LQYPAGYPSE (231 aa)) are methyl-CpG binding and interaction with HDAC1. Positions 449-613 (GPIPGIPVGS…FLVWRYLLRR (165 aa)) constitute a YDG domain. The disordered stretch occupies residues 643–676 (PSEKEGKKTKGQSKKQGSEATKRPASDDECPGDS). The span at 658–668 (QGSEATKRPAS) shows a compositional bias: basic and acidic residues. Serine 668 is subject to Phosphoserine. The RING-type zinc finger occupies 734 to 773 (CVCCQELVYQPVTTECFHNVCKDCLQRSFKAQVFSCPACR).

In terms of assembly, homodimer; disulfide-linked. Binds methylated CpG containing oligonucleotides. Interacts with H3; the interaction has a preference for the 'Lys-9' trimethylated form of H3 (H3K9me3). Interacts with PCNP. Interacts with HDAC1. Interacts directly with CCNE1; the interaction ubiquitinates CCNE1 and appears independent of CCNE1 phosphorylation. Interacts with CCND1; the interaction ubiquitinates CCND1 and appears independent of CCND1 phosphorylation. Interacts with p53/TP53 and RB1. Interacts with UBE2I. Interacts with ZNF618. Interacts with UHRF1. Interacts with FANCD2. Interacts with ATR. Interacts with PCNA. May be autoubiquitinated; which may lead to proteasomal degradation. Post-translationally, phosphorylated. Phosphorylation may be mediated by CDK2. In terms of processing, autosumoylated. As to expression, mostly detected in several tissues, including the thymus, spleen, lung, adrenal gland, and ovary. In addition, found in several tissues in the brain (cerebellum, hippocampus, and cerebral cortex).

It localises to the nucleus. The protein resides in the chromosome. The enzyme catalyses S-ubiquitinyl-[E2 ubiquitin-conjugating enzyme]-L-cysteine + [acceptor protein]-L-lysine = [E2 ubiquitin-conjugating enzyme]-L-cysteine + N(6)-ubiquitinyl-[acceptor protein]-L-lysine.. It functions in the pathway protein modification; protein ubiquitination. With respect to regulation, E3 ligase activity is robustly activated by 5-hydroxy-methylcytosine. Its function is as follows. E3 ubiquitin ligase that plays important roles in DNA methylation, histone modifications, cell cycle and DNA repair. Acts as a specific reader for 5-hydroxymethylcytosine (5hmC) and thereby recruits various substrates to these sites to ubiquitinate them. This activity also allows the maintenance of 5mC levels at specific genomic loci and regulates neuron-related gene expression. Participates in cell cycle regulation by ubiquitinating cyclins CCND1 and CCNE1 and thus inducing G1 arrest. Also ubiquitinates PCNP leading to its degradation by the proteasome. Plays an active role in DNA damage repair by ubiquitinating p21/CDKN1A leading to its proteasomal degradation. Also promotes DNA repair by acting as an interstrand cross-links (ICLs) sensor. Mechanistically, cooperates with UHRF1 to ensure recruitment of FANCD2 to ICLs, leading to FANCD2 monoubiquitination and subsequent activation. Contributes to UV-induced DNA damage response by physically interacting with ATR in response to irradiation, thereby promoting ATR activation. The protein is E3 ubiquitin-protein ligase UHRF2 (Uhrf2) of Mus musculus (Mouse).